The following is a 1147-amino-acid chain: Nucleolar protein 6 (1147 aa).

The interval 1 to 49 is disordered; that stretch reads MQKKRSRAGAAEQEAASDDGEMSDSSDKMEVSQNKGKSGIKRAPEADDV. Acidic residues predominate over residues 15–24; that stretch reads AASDDGEMSD.

It belongs to the NRAP family. Part of the small subunit (SSU) processome, composed of more than 70 proteins and the RNA chaperone small nucleolar RNA (snoRNA) U3.

The protein resides in the nucleus. It localises to the nucleolus. Its subcellular location is the chromosome. Functionally, part of the small subunit (SSU) processome, first precursor of the small eukaryotic ribosomal subunit. During the assembly of the SSU processome in the nucleolus, many ribosome biogenesis factors, an RNA chaperone and ribosomal proteins associate with the nascent pre-rRNA and work in concert to generate RNA folding, modifications, rearrangements and cleavage as well as targeted degradation of pre-ribosomal RNA by the RNA exosome. This chain is Nucleolar protein 6 (nol6), found in Xenopus laevis (African clawed frog).